A 651-amino-acid chain; its full sequence is ATP-binding cassette sub-family G member 5 (651 aa).

Residues 1-32 are disordered; the sequence is MGDLSSLTPGGSMGLQVNRGSQSSLEGAPATA. The Cytoplasmic portion of the chain corresponds to 1–383; sequence MGDLSSLTPG…RVTRNLVRNK (383 aa). Positions 52–293 constitute an ABC transporter domain; the sequence is RPWWDITSCR…FNDCGYPCPE (242 aa). 86–93 serves as a coordination point for ATP; it reads GSSGSGKT. The helical transmembrane segment at 384 to 404 threads the bilayer; sequence LAVITRLLQNLIMGLFLLFFV. An ABC transmembrane type-2 domain is found at 388–645; sequence TRLLQNLIMG…ILGIVVFKIR (258 aa). Topologically, residues 405 to 421 are extracellular; the sequence is LRVRSNVLKGAIQDRVG. A helical transmembrane segment spans residues 422–442; the sequence is LLYQFVGATPYTGMLNAVNLF. Residues 443-467 are Cytoplasmic-facing; it reads PVLRAVSDQESQDGLYQKWQMMLAY. The chain crosses the membrane as a helical span at residues 468–489; that stretch reads ALHVLPFSVVATMIFSSVCYWT. Over 490–500 the chain is Extracellular; that stretch reads LGLHPEVARFG. The helical transmembrane segment at 501–521 threads the bilayer; sequence YFSAALLAPHLIGEFLTLVLL. The Cytoplasmic portion of the chain corresponds to 522 to 528; the sequence is GIVQNPN. The chain crosses the membrane as a helical span at residues 529–549; it reads IVNSVVALLSIAGVLVGSGFL. Over 550 to 623 the chain is Extracellular; the sequence is RNIQEMPIPF…PGATSRFTMN (74 aa). 2 N-linked (GlcNAc...) asparagine glycosylation sites follow: asparagine 584 and asparagine 591. Residues 624–644 form a helical membrane-spanning segment; sequence FLILYSFIPALVILGIVVFKI. At 645–651 the chain is on the cytoplasmic side; the sequence is RDHLISR.

Belongs to the ABC transporter superfamily. ABCG family. Eye pigment precursor importer (TC 3.A.1.204) subfamily. In terms of assembly, heterodimer with ABCG8. It depends on Mg(2+) as a cofactor. In terms of processing, N-glycosylated. In terms of tissue distribution, strongly expressed in the liver, lower levels in the small intestine and colon.

The protein resides in the cell membrane. The protein localises to the apical cell membrane. The enzyme catalyses cholesterol(in) + ATP + H2O = cholesterol(out) + ADP + phosphate + H(+). The catalysed reaction is sitosterol(in) + ATP + H2O = sitosterol(out) + ADP + phosphate + H(+). The ATPase activity of the heterodimer is stimulated by cholate. Taurocholate, glycocholate, taurochenodeoxycholate, glycochenodeoxycholate and taurodeoxycholate also stimulate ATPase activity, but to a lower degree. Glycodeoxycholate has no significant effect on ATPase activity. ATPase activity is inhibited by vanadate and by berillium fluoride. Its function is as follows. ABCG5 and ABCG8 form an obligate heterodimer that mediates Mg(2+)- and ATP-dependent sterol transport across the cell membrane. Plays an essential role in the selective transport of dietary plant sterols and cholesterol in and out of the enterocytes and in the selective sterol excretion by the liver into bile. Required for normal sterol homeostasis. The heterodimer with ABCG8 has ATPase activity. In Homo sapiens (Human), this protein is ATP-binding cassette sub-family G member 5.